Consider the following 219-residue polypeptide: Transcription factor MYB23 (219 aa).

HTH myb-type domains follow at residues 9–61 (EHEY…MNYL) and 62–116 (SPNV…SKKL). 2 consecutive DNA-binding regions (H-T-H motif) follow at residues 37–61 (WNRIAKKTGLKRCGKSCRLRWMNYL) and 89–112 (WSLIAKRVPGRTDNQVKNYWNTHL).

In terms of assembly, interacts with BHLH2/EGL3/MYC146, BHLH12/MYC1 and GL3. Expressed in roots, seed coats, leaves, stems and flowers. Detected specifically in trichomes, and in the cell division and differentiation zone of the root.

It is found in the nucleus. In terms of biological role, transcription activator, when associated with BHLH2/EGL3/MYC146 or BHLH12/MYC1. Regulates the epidermal cell fate specification. Mediates the formation of columellae and accumulation of mucilages on seed coats. Controls the elongation of epidermal cells positively in roots but negatively in stems, leading to the promotion of primary roots elongation and repression of leaves and stems elongation, respectively. Ovoids ectopic root-hair formation, probably by inducing GL2 in roots. Controls trichome initiation and branching. This is Transcription factor MYB23 (MYB23) from Arabidopsis thaliana (Mouse-ear cress).